The following is a 449-amino-acid chain: MLDLLKQTIFTRDFIFILILLGFILVVTLLLLENRRDNIQLKQINQKVKDLIAGDYSKVLDMQGGSEITNITNNLNDLSEVIRLTQENLEQESKRLNSILFYMTDGVLATNRRGQIIMINDTAKKQLGLVKEDVLNRSILELLKIEENYELRDLITQSPELLLDSQDINGEYLNLRVRFALIRRESGFISGLVAVLHDTTEQEKEERERRLFVSNVSHELRTPLTSVKSYLEALDEGALCETVAPDFIKVSLDETNRMMRMVTDLLHLSRIDNATSHLDVELINFTAFITFILNRFDKMKGQEKEKKYELVRDYPINSIWMEIDTDKMTQVVDNILNNAIKYSPDGGKITVRMKTTEDQMILSISDHGLGIPKQDLPRIFDRFYRVDRARSRAQGGTGLGLSIAKEIIKQHKGFIWAKSEYGKGSTFTIVLPYDKDAVKEEVWEDEVED.

The Extracellular segment spans residues 1 to 13 (MLDLLKQTIFTRD). Residues 14-34 (FIFILILLGFILVVTLLLLEN) traverse the membrane as a helical segment. One can recognise an HAMP domain in the interval 35–87 (RRDNIQLKQINQKVKDLIAGDYSKVLDMQGGSEITNITNNLNDLSEVIRLTQE). Over 35–449 (RRDNIQLKQI…EEVWEDEVED (415 aa)) the chain is Cytoplasmic. A PAS domain is found at 92-158 (ESKRLNSILF…YELRDLITQS (67 aa)). One can recognise a PAC domain in the interval 157–211 (QSPELLLDSQDINGEYLNLRVRFALIRRESGFISGLVAVLHDTTEQEKEERERRL). The 221-residue stretch at 215-435 (NVSHELRTPL…TFTIVLPYDK (221 aa)) folds into the Histidine kinase domain. His218 is subject to Phosphohistidine.

May form homodimers. May interact with serine/threonine-protein kinase StkP; the interaction may play a role in regulating Walk signal transduction. Autophosphorylated.

Its subcellular location is the membrane. It carries out the reaction ATP + protein L-histidine = ADP + protein N-phospho-L-histidine.. Member of the two-component regulatory system WalK/WalR that regulates genes involved in cell wall metabolism. Functions as a sensor protein kinase which is autophosphorylated at a histidine residue and transfers its phosphate group to WalR. In turn, WalR binds to the upstream promoter regions of target genes to positively and negatively regulate their expression. Required to maintain expression of WalRK regulon genes in exponentially growing cells, including peptidoglycan hydrolase pcsB. Phosphorylates WalR and also capable of dephosphorylation of WalR. WalK phosphatase activity is probably involved in preventing cross-talk from PnpS and other non-cognate sensor kinases during exponential growth. May be considered a potential virulence factor. The polypeptide is Sensor histidine protein kinase/phosphatase WalK (Streptococcus pneumoniae serotype 2 (strain D39 / NCTC 7466)).